The following is a 231-amino-acid chain: Superoxide dismutase [Mn] 1, mitochondrial (231 aa).

A mitochondrion-targeting transit peptide spans 1–29 (MAIRCVASRKTLAGLKETSSRLLRIRGIQ). Positions 55 and 103 each coordinate Mn(2+). A Phosphoserine modification is found at S124. Positions 192 and 196 each coordinate Mn(2+).

It belongs to the iron/manganese superoxide dismutase family. In terms of assembly, homotetramer. Mn(2+) is required as a cofactor.

The protein resides in the mitochondrion matrix. It catalyses the reaction 2 superoxide + 2 H(+) = H2O2 + O2. Its activity is regulated as follows. Activated by MTM1. Functionally, destroys superoxide anion radicals which are normally produced within the cells and which are toxic to biological systems. The protein is Superoxide dismutase [Mn] 1, mitochondrial (MSD1) of Arabidopsis thaliana (Mouse-ear cress).